The following is a 160-amino-acid chain: Large ribosomal subunit protein uL22c (160 aa).

This sequence belongs to the universal ribosomal protein uL22 family. In terms of assembly, part of the 50S ribosomal subunit.

The protein resides in the plastid. Its subcellular location is the chloroplast. Its function is as follows. This protein binds specifically to 23S rRNA. Functionally, the globular domain of the protein is located near the polypeptide exit tunnel on the outside of the subunit, while an extended beta-hairpin is found that lines the wall of the exit tunnel in the center of the 70S ribosome. The protein is Large ribosomal subunit protein uL22c (rpl22) of Crucihimalaya wallichii (Rock-cress).